Reading from the N-terminus, the 136-residue chain is Nucleoside diphosphate kinase (136 aa).

ATP-binding residues include Lys-10, Phe-58, Arg-86, Thr-92, Arg-104, and Asn-114. Catalysis depends on His-117, which acts as the Pros-phosphohistidine intermediate.

This sequence belongs to the NDK family. Homotetramer. Mg(2+) is required as a cofactor.

It is found in the cytoplasm. It carries out the reaction a 2'-deoxyribonucleoside 5'-diphosphate + ATP = a 2'-deoxyribonucleoside 5'-triphosphate + ADP. It catalyses the reaction a ribonucleoside 5'-diphosphate + ATP = a ribonucleoside 5'-triphosphate + ADP. In terms of biological role, major role in the synthesis of nucleoside triphosphates other than ATP. The ATP gamma phosphate is transferred to the NDP beta phosphate via a ping-pong mechanism, using a phosphorylated active-site intermediate. In Mycobacterium marinum (strain ATCC BAA-535 / M), this protein is Nucleoside diphosphate kinase.